Reading from the N-terminus, the 447-residue chain is GTPase Der (447 aa).

2 EngA-type G domains span residues 3–167 and 180–353; these read PVIA…ALPE and IRLA…KSAN. GTP contacts are provided by residues 9–16, 56–60, 119–122, 186–193, 233–237, and 298–301; these read GRPNVGKS, DTGGF, NKAE, DTAGL, and NKWD. Positions 354-438 constitute a KH-like domain; that stretch reads RKMPTPVLTR…PLRIEMKTSS (85 aa).

Belongs to the TRAFAC class TrmE-Era-EngA-EngB-Septin-like GTPase superfamily. EngA (Der) GTPase family. In terms of assembly, associates with the 50S ribosomal subunit.

Its function is as follows. GTPase that plays an essential role in the late steps of ribosome biogenesis. This is GTPase Der from Acidovorax ebreus (strain TPSY) (Diaphorobacter sp. (strain TPSY)).